The primary structure comprises 302 residues: Light-independent protochlorophyllide reductase iron-sulfur ATP-binding protein (302 aa).

Over residues 1–10 the composition is skewed to polar residues; that stretch reads MSTATISPSQ. Residues 1-21 form a disordered region; it reads MSTATISPSQIGRGARPDGEG. ATP contacts are provided by residues 46-51 and Lys75; that span reads GIGKST. Ser50 is a Mg(2+) binding site. Cys131 and Cys165 together coordinate [4Fe-4S] cluster. ATP-binding positions include 216–217 and 240–242; these read NR and PAL.

The protein belongs to the NifH/BchL/ChlL family. As to quaternary structure, homodimer. Protochlorophyllide reductase is composed of three subunits; BchL, BchN and BchB. [4Fe-4S] cluster is required as a cofactor.

The catalysed reaction is chlorophyllide a + oxidized 2[4Fe-4S]-[ferredoxin] + 2 ADP + 2 phosphate = protochlorophyllide a + reduced 2[4Fe-4S]-[ferredoxin] + 2 ATP + 2 H2O. It functions in the pathway porphyrin-containing compound metabolism; bacteriochlorophyll biosynthesis (light-independent). In terms of biological role, component of the dark-operative protochlorophyllide reductase (DPOR) that uses Mg-ATP and reduced ferredoxin to reduce ring D of protochlorophyllide (Pchlide) to form chlorophyllide a (Chlide). This reaction is light-independent. The L component serves as a unique electron donor to the NB-component of the complex, and binds Mg-ATP. The chain is Light-independent protochlorophyllide reductase iron-sulfur ATP-binding protein from Rubrivivax gelatinosus (strain NBRC 100245 / IL144).